The following is a 345-amino-acid chain: Sesquiterpene synthase GALMADRAFT_104215 (345 aa).

4 residues coordinate Mg(2+): aspartate 91, asparagine 226, serine 230, and glutamate 234. Residues 91 to 95 (DEFTD) carry the DDXXD motif motif. (2E,6E)-farnesyl diphosphate-binding residues include arginine 316 and tyrosine 317.

It belongs to the terpene synthase family. The cofactor is Mg(2+).

The catalysed reaction is (2E,6E)-farnesyl diphosphate = beta-gurjunene + diphosphate. Functionally, terpene cyclase that catalyzes the cyclization of farnesyl diphosphate (FPP) to beta-gurjunene. The protein is Sesquiterpene synthase GALMADRAFT_104215 of Galerina marginata (strain CBS 339.88).